The chain runs to 171 residues: Actin-related protein 2/3 complex subunit 4 (171 aa).

The protein belongs to the ARPC4 family. As to quaternary structure, component of the Arp2/3 complex composed of ARP2, ARP3, ARC40/p41-ARC, ARC35/p34-ARC, ARC18/p21-ARC, ARC19/p20-ARC and ARC16/p16-ARC.

Its subcellular location is the cytoplasm. It is found in the cytoskeleton. It localises to the actin patch. Functionally, functions as actin-binding component of the Arp2/3 complex which is involved in regulation of actin polymerization and together with an activating nucleation-promoting factor (NPF) mediates the formation of branched actin networks. Seems to contact the mother actin filament. The polypeptide is Actin-related protein 2/3 complex subunit 4 (ARC19) (Saccharomyces cerevisiae (strain ATCC 204508 / S288c) (Baker's yeast)).